The primary structure comprises 226 residues: Large ribosomal subunit protein uL1 (226 aa).

It belongs to the universal ribosomal protein uL1 family. Part of the 50S ribosomal subunit.

Functionally, binds directly to 23S rRNA. The L1 stalk is quite mobile in the ribosome, and is involved in E site tRNA release. In terms of biological role, protein L1 is also a translational repressor protein, it controls the translation of the L11 operon by binding to its mRNA. The polypeptide is Large ribosomal subunit protein uL1 (Borreliella burgdorferi (strain ATCC 35210 / DSM 4680 / CIP 102532 / B31) (Borrelia burgdorferi)).